A 566-amino-acid chain; its full sequence is Putative sulfite reductase [NADPH] hemoprotein beta-component (566 aa).

Residues cysteine 430, cysteine 436, cysteine 475, and cysteine 479 each coordinate [4Fe-4S] cluster. Siroheme is bound at residue cysteine 479.

Belongs to the nitrite and sulfite reductase 4Fe-4S domain family. In terms of assembly, alpha(8)-beta(8). The alpha component is a flavoprotein, the beta component is a hemoprotein. Siroheme is required as a cofactor. Requires [4Fe-4S] cluster as cofactor.

It carries out the reaction hydrogen sulfide + 3 NADP(+) + 3 H2O = sulfite + 3 NADPH + 4 H(+). It functions in the pathway sulfur metabolism; hydrogen sulfide biosynthesis; hydrogen sulfide from sulfite (NADPH route): step 1/1. In terms of biological role, component of the sulfite reductase complex that catalyzes the 6-electron reduction of sulfite to sulfide. This is one of several activities required for the biosynthesis of L-cysteine from sulfate. The protein is Putative sulfite reductase [NADPH] hemoprotein beta-component of Buchnera aphidicola subsp. Schizaphis graminum (strain Sg).